An 84-amino-acid polypeptide reads, in one-letter code: MQHDLHPEYSEVTIQLADGSEITTRSTMETDSYETEVDSTNHPFYTGRRQFVDTAGRVEKFNRRYGLTDDDEGDDEETEDAADE.

2 disordered regions span residues 1-41 (MQHD…DSTN) and 63-84 (RRYG…AADE). Residues 21 to 30 (EITTRSTMET) show a composition bias toward polar residues. The segment covering 68 to 84 (TDDDEGDDEETEDAADE) has biased composition (acidic residues).

This sequence belongs to the bacterial ribosomal protein bL31 family. Type A subfamily. As to quaternary structure, part of the 50S ribosomal subunit.

Binds the 23S rRNA. This chain is Large ribosomal subunit protein bL31, found in Salinibacter ruber (strain DSM 13855 / M31).